A 125-amino-acid chain; its full sequence is Protein ApaG (125 aa).

In terms of domain architecture, ApaG spans 3 to 125 (TAVTEGIEVT…FPLVVPGSLN (123 aa)).

In Anaeromyxobacter dehalogenans (strain 2CP-C), this protein is Protein ApaG.